The chain runs to 826 residues: (2S)-3-sulfopropanediol dehydratase (826 aa).

A PFL domain is found at proline 33 to lysine 695. Cysteine 464 acts as the Cysteine radical intermediate in catalysis. The Proton acceptor role is filled by glutamate 466. The Glycine radical domain maps to proline 706 to phenylalanine 826. Glycine 802 is subject to Glycine radical.

Belongs to the glycyl radical enzyme (GRE) family. Post-translationally, requires the activating protein HpfH to generate the key active site glycyl radical on Gly-802 that is involved in catalysis.

It carries out the reaction (2S)-3-sulfopropanediol = 3-oxopropane-1-sulfonate + H2O. It functions in the pathway organosulfur degradation; alkanesulfonate degradation. Involved in the degradation of the organosulfur compound 2(S)-dihydroxypropanesulfonate (DHPS). Catalyzes the radical-mediated dehydration of DHPS to produce 3-sulfopropionaldehyde (3-oxopropane-1-sulfonate). This chain is (2S)-3-sulfopropanediol dehydratase, found in Klebsiella oxytoca.